Consider the following 260-residue polypeptide: Small ribosomal subunit protein eS4 (260 aa).

Residues 46 to 111 (VPLLILVRDM…RYRVVMNEHH (66 aa)) enclose the S4 RNA-binding domain.

This sequence belongs to the eukaryotic ribosomal protein eS4 family.

The chain is Small ribosomal subunit protein eS4 from Methanopyrus kandleri (strain AV19 / DSM 6324 / JCM 9639 / NBRC 100938).